The sequence spans 1564 residues: ATP-dependent permease PDR10 (1564 aa).

The span at 1-16 (MLQAPSSSNSGLNQGN) shows a compositional bias: polar residues. A disordered region spans residues 1-37 (MLQAPSSSNSGLNQGNAAPDGPPNETQPYEGLDAAAQ). Residues 1–587 (MLQAPSSSNS…AAIFFAILFN (587 aa)) lie on the Cytoplasmic side of the membrane. In terms of domain architecture, ABC transporter 1 spans 174 to 430 (ISRRLFHRTH…FQRMGYVCPE (257 aa)). Helical transmembrane passes span 588–608 (AFSS…TEKH), 624–644 (TFSD…PYYF), 674–694 (RCIG…SVLL), 699–719 (MYTG…WISY), and 732–752 (INEF…GPNY). An N-linked (GlcNAc...) asparagine glycan is attached at Asn-754. Residues 839-849 (KGIVSEKKKKN) show a composition bias toward basic residues. The disordered stretch occupies residues 839–872 (KGIVSEKKKKNQPTLSTSDAEKDVEMNNNSSATD). Residues 841-861 (IVSEKKKKNQPTLSTSDAEKD) traverse the membrane as a helical segment. Residues 862–1304 (VEMNNNSSAT…IFMFTVVFNP (443 aa)) lie on the Cytoplasmic side of the membrane. The 244-residue stretch at 923-1166 (FHWKNLCYDI…MINYFEAHGA (244 aa)) folds into the ABC transporter 2 domain. 959–966 (GASGAGKT) lines the ATP pocket. A run of 6 helical transmembrane segments spans residues 1305-1325 (ILQQ…ARER), 1340-1360 (ILVE…VYYY), 1390-1410 (VYIS…ENAA), 1426-1446 (VLAT…VSPL), 1459-1479 (ANAS…PSGM), and 1491-1511 (STGT…FCQF). The Cytoplasmic segment spans residues 1512–1564 (SSTNDYLATVSSSYSRRWMNYGIFSAYIVFDYCAAIFLYWLVRVPKKSKKLKK).

Belongs to the ABC transporter superfamily. ABCG family. PDR (TC 3.A.1.205) subfamily.

Its subcellular location is the membrane. The protein is ATP-dependent permease PDR10 (PDR10) of Saccharomyces cerevisiae (strain ATCC 204508 / S288c) (Baker's yeast).